The primary structure comprises 1030 residues: F-box/WD repeat-containing protein 10 (1030 aa).

Residues 280 to 329 (RDFIRDLPLHLSKYILRMLDKHSLNRCIFVSQHWATLAQQVKVDQSMHSF) form the F-box domain. 5 WD repeats span residues 466 to 505 (GHAG…CVRI), 508 to 547 (GHQG…KTFK), 549 to 584 (KDPI…LQKT), 587 to 624 (GHEG…ERCL), and 626 to 667 (AFKH…KVIK). The segment at 709–773 (KNKVKKSKDK…LSSDDMETPV (65 aa)) is disordered. Residues 716–733 (KDKEEEREETSLGDEHSR) show a composition bias toward basic and acidic residues. Over residues 734–749 (STIQGHSLKDSVSSKQ) the composition is skewed to polar residues. Residues 963–992 (FMLMTVKEEKEFAEAKMKEYEASVSTKEVD) adopt a coiled-coil conformation.

Its function is as follows. Probable substrate-recognition component of a SCF (SKP1-CUL1-F-box protein)-type E3 ubiquitin ligase complex which mediates the ubiquitination and subsequent proteasomal degradation of target proteins. Overexpression is leading to degradation of CBX5 and CBX1. In Mus musculus (Mouse), this protein is F-box/WD repeat-containing protein 10 (Fbxw10).